Here is a 151-residue protein sequence, read N- to C-terminus: Small ribosomal subunit protein uS15 (151 aa).

Residues 1 to 20 (MARLHSGKRGSSGSTRPLRT) are disordered.

The protein belongs to the universal ribosomal protein uS15 family. As to quaternary structure, part of the 30S ribosomal subunit.

This is Small ribosomal subunit protein uS15 from Methanococcus maripaludis (strain C7 / ATCC BAA-1331).